The chain runs to 320 residues: Cytochrome f (320 aa).

An N-terminal signal peptide occupies residues 1–36; sequence MKLNSLINLIQKSIYSCTLLLTILNIICIAPNSSNA. Residues Phe-37, Cys-57, Cys-60, and His-61 each coordinate heme. A helical transmembrane segment spans residues 286-305; the sequence is IKGMIAFFFVSVLAQIFFVL.

Belongs to the cytochrome f family. The 4 large subunits of the cytochrome b6-f complex are cytochrome b6, subunit IV (17 kDa polypeptide, petD), cytochrome f and the Rieske protein, while the 4 small subunits are PetG, PetL, PetM and PetN. The complex functions as a dimer. Heme serves as cofactor.

It localises to the plastid. It is found in the chloroplast thylakoid membrane. Component of the cytochrome b6-f complex, which mediates electron transfer between photosystem II (PSII) and photosystem I (PSI), cyclic electron flow around PSI, and state transitions. The protein is Cytochrome f (petA) of Porphyra purpurea (Red seaweed).